The sequence spans 391 residues: GDP-mannose transporter (391 aa).

Residues 1–11 (MDDKKNEDVEM) are compositionally biased toward basic and acidic residues. The segment at 1 to 28 (MDDKKNEDVEMRNFNGRSSPSQRDPFIS) is disordered. The Cytoplasmic portion of the chain corresponds to 1–44 (MDDKKNEDVEMRNFNGRSSPSQRDPFISKPGAAKRGGSSFDLSN). A helical membrane pass occupies residues 45–65 (VTNSPGISILAYCLASISMTV). At 66–75 (TNKYCVSGSN) the chain is on the lumenal side. Residues 76–96 (WNLNFFYLAIQSVVCIIAIII) form a helical membrane-spanning segment. The Cytoplasmic portion of the chain corresponds to 97–115 (CKQAGLITNLAPFDTKKAK). The chain crosses the membrane as a helical span at residues 116-138 (TWFPISLLLVGMIYTSTKALQFL). At 139-141 (SVP) the chain is on the lumenal side. The chain crosses the membrane as a helical span at residues 142–164 (VYTIFKNLTIIVIAYGEVLWFGG). At 165-170 (SVTPSA) the chain is on the cytoplasmic side. The helical transmembrane segment at 171 to 193 (LFSFGLMVLSSVVAAWADIQHAL) threads the bilayer. Residues 194–209 (YGGGATQTKEAADALS) are Lumenal-facing. Residues 210–230 (TLNAGYAWMGMNVFCTAAYVL) form a helical membrane-spanning segment. The Cytoplasmic portion of the chain corresponds to 231-245 (SMRKVIKKMNFKDWD). A helical membrane pass occupies residues 246 to 266 (TMFYNNLLTIPVLFVCSFVFE). N-linked (GlcNAc...) asparagine glycosylation is found at Asn-267 and Asn-272. Residues 267 to 284 (NWSSENLTKNFPLETRNN) are Lumenal-facing. Residues 285–305 (LILGMIYSGLATIFISYCSAW) form a helical membrane-spanning segment. The Cytoplasmic segment spans residues 306 to 313 (CIRVTSST). Residues 314–336 (TYSMVGALNKLPIAVSGLVFFAA) form a helical membrane-spanning segment. The Lumenal portion of the chain corresponds to 337-339 (PVT). Residues 340-359 (FGSVSAIFIGFVSGIVYAWA) form a helical membrane-spanning segment. At 360–391 (KVRQNQSKGSVLPTTQPVMSASSQSNRDAAKA) the chain is on the cytoplasmic side. The interval 369–391 (SVLPTTQPVMSASSQSNRDAAKA) is disordered.

This sequence belongs to the TPT transporter family. SLC35D subfamily. Homooligomer.

It localises to the golgi apparatus membrane. The protein resides in the cytoplasmic vesicle membrane. It is found in the endoplasmic reticulum membrane. Involved in the import of GDP-mannose from the cytoplasm into the Golgi lumen. This Sclerotinia sclerotiorum (strain ATCC 18683 / 1980 / Ss-1) (White mold) protein is GDP-mannose transporter (vrg4).